Here is a 370-residue protein sequence, read N- to C-terminus: MAVSFTITYKDESTGARLGLLYTPHGTVETPVFMPVGTQATVKTMTPEEVRDIGGRMILSNTYHLYLRPGHELIREAGGLHRFMHWDGPILTDSGGFQVFSLGPLRKVSEEGVAFRSHIDGSEHFFSPEKAMEVQMALGSDIAMAFDECAPYPCSREYALAATERTTRWARRCRTAHDREDQGLFGIVQGGTFKDLRERSARELVELDFPGYAIGGLSVGEPKQLMYEVLDYTVPLLPEEKPRYLMGVGSPDCLVEGVLRGIDMFDCVLPTRIARNGTALTRQGRLVVRNAEYARDFSPLEPDCDCYACRNYTRAYIRHLIKANEILGIRLTTIHNLYFIMKLMEEIRAAVRQGRMLQFRDDFLRKYQGD.

The active-site Proton acceptor is D93. Substrate contacts are provided by residues D93–F97, D147, Q189, and G216. Positions G247–C253 are RNA binding. The active-site Nucleophile is the D266. The RNA binding; important for wobble base 34 recognition stretch occupies residues T271 to R275. Residues C304, C306, C309, and H335 each coordinate Zn(2+).

The protein belongs to the queuine tRNA-ribosyltransferase family. Homodimer. Within each dimer, one monomer is responsible for RNA recognition and catalysis, while the other monomer binds to the replacement base PreQ1. It depends on Zn(2+) as a cofactor.

The catalysed reaction is 7-aminomethyl-7-carbaguanine + guanosine(34) in tRNA = 7-aminomethyl-7-carbaguanosine(34) in tRNA + guanine. Its pathway is tRNA modification; tRNA-queuosine biosynthesis. Functionally, catalyzes the base-exchange of a guanine (G) residue with the queuine precursor 7-aminomethyl-7-deazaguanine (PreQ1) at position 34 (anticodon wobble position) in tRNAs with GU(N) anticodons (tRNA-Asp, -Asn, -His and -Tyr). Catalysis occurs through a double-displacement mechanism. The nucleophile active site attacks the C1' of nucleotide 34 to detach the guanine base from the RNA, forming a covalent enzyme-RNA intermediate. The proton acceptor active site deprotonates the incoming PreQ1, allowing a nucleophilic attack on the C1' of the ribose to form the product. After dissociation, two additional enzymatic reactions on the tRNA convert PreQ1 to queuine (Q), resulting in the hypermodified nucleoside queuosine (7-(((4,5-cis-dihydroxy-2-cyclopenten-1-yl)amino)methyl)-7-deazaguanosine). The protein is Queuine tRNA-ribosyltransferase of Pelotomaculum thermopropionicum (strain DSM 13744 / JCM 10971 / SI).